Here is a 230-residue protein sequence, read N- to C-terminus: Thymidylate kinase (230 aa).

20–27 (GGEGSGKS) provides a ligand contact to ATP.

Belongs to the thymidylate kinase family.

The catalysed reaction is dTMP + ATP = dTDP + ADP. In terms of biological role, phosphorylation of dTMP to form dTDP in both de novo and salvage pathways of dTTP synthesis. This Nitrobacter winogradskyi (strain ATCC 25391 / DSM 10237 / CIP 104748 / NCIMB 11846 / Nb-255) protein is Thymidylate kinase.